Consider the following 249-residue polypeptide: MSGFQMPQANFKAGFVRENFNKIAKKYDRFNDWNSFLLHRVWKNHLVREIENNFSGHLHVLDLCCGTGDISLRLENSSFVDHVTCVDFSENMLEIAKTRLKKQAQKGRVHFELGDATKLIQFQNSQFDVVSIGFGLRNVDNLSKAIGEIFRVLKPGGMFLNLDVGKVKNPWIRWIADFYFFKIVPILGYILWGGKNEMFDYLPVSSLSYPDQETLQLILEKEGFQRVQYKNFVFGNVVLHVAKKPSEKT.

Residues T67, D87, and 115-116 contribute to the S-adenosyl-L-methionine site; that span reads DA.

It belongs to the class I-like SAM-binding methyltransferase superfamily. MenG/UbiE family.

The enzyme catalyses a 2-demethylmenaquinol + S-adenosyl-L-methionine = a menaquinol + S-adenosyl-L-homocysteine + H(+). It functions in the pathway quinol/quinone metabolism; menaquinone biosynthesis; menaquinol from 1,4-dihydroxy-2-naphthoate: step 2/2. Its function is as follows. Methyltransferase required for the conversion of demethylmenaquinol (DMKH2) to menaquinol (MKH2). The protein is Demethylmenaquinone methyltransferase of Leptospira interrogans serogroup Icterohaemorrhagiae serovar copenhageni (strain Fiocruz L1-130).